A 205-amino-acid polypeptide reads, in one-letter code: SREBP regulating gene protein (205 aa).

Over 1–16 (MVPCGAVLWRRLLRKR) the chain is Cytoplasmic. Residues 17 to 35 (WVLGVVFGLSLVYFLSSTF) form a helical membrane-spanning segment. The Lumenal portion of the chain corresponds to 36–205 (KQEERTVRDR…GEYPPELLPV (170 aa)). The N-linked (GlcNAc...) asparagine glycan is linked to asparagine 67.

This sequence belongs to the SPRING family.

It is found in the golgi apparatus membrane. In terms of biological role, positively regulates hepatic SREBP signaling pathway by modulating the proper localization of SCAP (SREBP cleavage-activating protein) to the endoplasmic reticulum, thereby controlling the level of functional SCAP. This Gallus gallus (Chicken) protein is SREBP regulating gene protein.